We begin with the raw amino-acid sequence, 318 residues long: Beta-galactosidase small subunit (318 aa).

Belongs to the bacterial beta-galactosidase small subunit family. As to quaternary structure, heterodimer of a large (LacL) and a small subunit (LacM).

The catalysed reaction is Hydrolysis of terminal non-reducing beta-D-galactose residues in beta-D-galactosides.. In terms of biological role, component of a beta-galactosidase. In Lactobacillus helveticus (Lactobacillus suntoryeus), this protein is Beta-galactosidase small subunit.